The chain runs to 267 residues: Glutamate 5-kinase (267 aa).

Residue K14 coordinates ATP. Residues S54, D141, and N157 each contribute to the substrate site. ATP-binding positions include 177-178 (SD) and 219-225 (TGGMMSK).

Belongs to the glutamate 5-kinase family.

It localises to the cytoplasm. The catalysed reaction is L-glutamate + ATP = L-glutamyl 5-phosphate + ADP. It functions in the pathway amino-acid biosynthesis; L-proline biosynthesis; L-glutamate 5-semialdehyde from L-glutamate: step 1/2. Its function is as follows. Catalyzes the transfer of a phosphate group to glutamate to form L-glutamate 5-phosphate. This Streptococcus thermophilus (strain CNRZ 1066) protein is Glutamate 5-kinase.